The following is an 87-amino-acid chain: MGSFSIWHWLIVLLIVVMVFGTKKLKNIGSDLGGAVKGFKDGMKDGSTPEGTPASTTAATPPAGQVTNQQAHAADPGTIDVEAKHKG.

The helical transmembrane segment at 1 to 21 (MGSFSIWHWLIVLLIVVMVFG) threads the bilayer. Residues 40 to 87 (KDGMKDGSTPEGTPASTTAATPPAGQVTNQQAHAADPGTIDVEAKHKG) are disordered. Over residues 46–64 (GSTPEGTPASTTAATPPAG) the composition is skewed to low complexity.

The protein belongs to the TatA/E family. As to quaternary structure, the Tat system comprises two distinct complexes: a TatABC complex, containing multiple copies of TatA, TatB and TatC subunits, and a separate TatA complex, containing only TatA subunits. Substrates initially bind to the TatABC complex, which probably triggers association of the separate TatA complex to form the active translocon.

Its subcellular location is the cell inner membrane. Part of the twin-arginine translocation (Tat) system that transports large folded proteins containing a characteristic twin-arginine motif in their signal peptide across membranes. TatA could form the protein-conducting channel of the Tat system. This Paracidovorax citrulli (strain AAC00-1) (Acidovorax citrulli) protein is Sec-independent protein translocase protein TatA.